Reading from the N-terminus, the 650-residue chain is Epithelial sodium channel subunit beta (650 aa).

The Cytoplasmic segment spans residues 1–95 (MLLHINPAYL…IICEGPKKKA (95 aa)). A helical transmembrane segment spans residues 96 to 116 (MWFLLTLLFTALVCWQWGIFI). Residues 117–542 (RTYLSWEVSV…GGQFGFWMGG (426 aa)) lie on the Extracellular side of the membrane. 5 disulfides stabilise this stretch: Cys-143–Cys-317, Cys-229–Cys-234, Cys-241–Cys-248, Cys-294–Cys-301, and Cys-406–Cys-458. An N-linked (GlcNAc...) asparagine glycan is attached at Asn-244. Asn-305 is a glycosylation site (N-linked (GlcNAc...) asparagine). The chain crosses the membrane as a helical span at residues 543 to 563 (SVLCLIEFGEIIIDFVWITII). The Cytoplasmic portion of the chain corresponds to 564 to 650 (KLVALAKSLR…IESDSEGDAI (87 aa)). The disordered stretch occupies residues 600 to 650 (FQPDTAPRSPNTGPYPNEQALPIPGTPPPNYDSLRLQPLDVIESDSEGDAI). The short motif at 626-630 (PPPNY) is the PY motif; recruits WW domain-containing proteins and is thereby required for ubiquitination and inhibition of the channel by NEDD4 and NEDD4L element. The segment covering 641-650 (IESDSEGDAI) has biased composition (acidic residues). Phosphoserine is present on residues Ser-643 and Ser-645.

This sequence belongs to the amiloride-sensitive sodium channel (TC 1.A.6) family. SCNN1B subfamily. In terms of assembly, component of the heterotrimeric epithelial sodium channel (ENaC) composed of an alpha/SCNN1A, a beta/SCNN1B and a gamma/SCNN1G subunit. An additional delta/SCNN1D subunit can replace the alpha/SCNN1A subunit to form an alternative channel with specific properties. Interacts with WWP1 (via WW domains). Interacts with WWP2 (via WW domains); inhibits the channel. Interacts with the full-length immature form of PCSK9 (pro-PCSK9). Interacts (N-glycosylated) with BPIFA1; the interaction is direct and inhibits the proteolytic processing of SCNN1A and SCNN1G and the activation of ENaC. In terms of processing, ubiquitinated. Can be ubiquitinated at multiple sites and undergo monoubiquitination and polyubiquitination. Ubiquitination by NEDD4 or NEDD4L inhibits the ENaC channel through endocytosis, intracellular retention and degradation of its individual subunits. However, some studies could not confirm the ubiquitination of this subunit of the ENaC. Phosphorylated on serine and threonine residues. Aldosterone and insulin increase the basal level of phosphorylation. Post-translationally, N-glycosylated. N-glycosylation is required for interaction with BPIFA1.

It is found in the apical cell membrane. It localises to the cytoplasmic vesicle membrane. It carries out the reaction Na(+)(in) = Na(+)(out). With respect to regulation, originally identified and characterized by its inhibition by the diuretic drug amiloride. Its function is as follows. This is one of the three pore-forming subunits of the heterotrimeric epithelial sodium channel (ENaC), a critical regulator of sodium balance and fluid homeostasis. ENaC operates in epithelial tissues, where it mediates the electrodiffusion of sodium ions from extracellular fluid through the apical membrane of cells, with water following osmotically. It plays a key role in maintaining sodium homeostasis through electrogenic sodium reabsorption in the kidneys. Additionally, ENaC is essential for airway surface liquid homeostasis, which is crucial for proper mucus clearance. The chain is Epithelial sodium channel subunit beta from Pan troglodytes (Chimpanzee).